The sequence spans 33 residues: Large ribosomal subunit protein eL28 (33 aa).

Belongs to the eukaryotic ribosomal protein eL28 family. Component of the large ribosomal subunit.

It is found in the cytoplasm. Its function is as follows. Component of the large ribosomal subunit. The ribosome is a large ribonucleoprotein complex responsible for the synthesis of proteins in the cell. In Xenopus laevis (African clawed frog), this protein is Large ribosomal subunit protein eL28 (rpl28).